We begin with the raw amino-acid sequence, 487 residues long: Acetyl-coenzyme A carboxylase carboxyl transferase subunit beta, chloroplastic (487 aa).

The disordered stretch occupies residues 180–201; the sequence is SRNSSENEGSSKRTRTKGSDLT. In terms of domain architecture, CoA carboxyltransferase N-terminal spans 218–487; sequence LWVQCENCYG…PLNQKSSKIK (270 aa). Residues cysteine 222, cysteine 225, cysteine 241, and cysteine 244 each contribute to the Zn(2+) site. Residues 222 to 244 form a C4-type zinc finger; it reads CENCYGLNYKKFLKSKMNICEQC.

It belongs to the AccD/PCCB family. In terms of assembly, acetyl-CoA carboxylase is a heterohexamer composed of biotin carboxyl carrier protein, biotin carboxylase and 2 subunits each of ACCase subunit alpha and ACCase plastid-coded subunit beta (accD). The cofactor is Zn(2+).

It is found in the plastid. The protein localises to the chloroplast stroma. It catalyses the reaction N(6)-carboxybiotinyl-L-lysyl-[protein] + acetyl-CoA = N(6)-biotinyl-L-lysyl-[protein] + malonyl-CoA. Its pathway is lipid metabolism; malonyl-CoA biosynthesis; malonyl-CoA from acetyl-CoA: step 1/1. In terms of biological role, component of the acetyl coenzyme A carboxylase (ACC) complex. Biotin carboxylase (BC) catalyzes the carboxylation of biotin on its carrier protein (BCCP) and then the CO(2) group is transferred by the transcarboxylase to acetyl-CoA to form malonyl-CoA. This Atropa belladonna (Belladonna) protein is Acetyl-coenzyme A carboxylase carboxyl transferase subunit beta, chloroplastic.